A 521-amino-acid chain; its full sequence is AAA ATPase forming ring-shaped complexes (521 aa).

A coiled-coil region spans residues 4–44 (TEDLAALNDRLMAKNHALAEALSRAGKELTKAKSQLAQLAQ). Position 235–240 (235–240 (GNGKTM)) interacts with ATP.

Belongs to the AAA ATPase family. As to quaternary structure, homohexamer. Assembles into a hexameric ring structure.

The sequence is that of AAA ATPase forming ring-shaped complexes from Bifidobacterium longum (strain DJO10A).